We begin with the raw amino-acid sequence, 354 residues long: DNA-binding protein EMBP-1 (354 aa).

Disordered stretches follow at residues 1–24 (MASS…TPAQ), 106–193 (SAAG…RSAS), and 230–273 (EVNA…RKQQ). Composition is skewed to low complexity over residues 127–140 (SSSG…QGSS) and 232–245 (NAAA…SLSQ). Positions 246 to 265 (MDERELKRERRKQSNRESAR) are enriched in basic and acidic residues. Positions 250–313 (ELKRERRKQS…KTMETENKKL (64 aa)) constitute a bZIP domain. The segment at 252-271 (KRERRKQSNRESARRSRLRK) is basic motif. Positions 278 to 299 (LAQKVSELTAANGTLRSELDQL) are leucine-zipper.

The protein belongs to the bZIP family. Heterodimer.

It localises to the nucleus. Functionally, interacts specifically with the 8-bp sequence 5'-CACGTGGC-3'in the abscisic acid response element (ABARE). Also binds to the hexamer motif 5'-ACGTCA-3' of histone gene promoters. This chain is DNA-binding protein EMBP-1, found in Triticum aestivum (Wheat).